A 122-amino-acid polypeptide reads, in one-letter code: Large ribosomal subunit protein uL14 (122 aa).

This sequence belongs to the universal ribosomal protein uL14 family. In terms of assembly, part of the 50S ribosomal subunit. Forms a cluster with proteins L3 and L19. In the 70S ribosome, L14 and L19 interact and together make contacts with the 16S rRNA in bridges B5 and B8.

Its function is as follows. Binds to 23S rRNA. Forms part of two intersubunit bridges in the 70S ribosome. This chain is Large ribosomal subunit protein uL14, found in Pediococcus pentosaceus (strain ATCC 25745 / CCUG 21536 / LMG 10740 / 183-1w).